Consider the following 696-residue polypeptide: Polyribonucleotide nucleotidyltransferase (696 aa).

Mg(2+) contacts are provided by D486 and D492. The KH domain occupies 553–612 (PRIIVRNIPKDRIGELIGPGGKNVRGISELTGAELYIEDDGRVTISGSNQESAEKAAKMV). The region spanning 622–690 (GKIYEGKVKR…KTGKIDLSRK (69 aa)) is the S1 motif domain.

The protein belongs to the polyribonucleotide nucleotidyltransferase family. Mg(2+) is required as a cofactor.

The protein localises to the cytoplasm. The catalysed reaction is RNA(n+1) + phosphate = RNA(n) + a ribonucleoside 5'-diphosphate. Its function is as follows. Involved in mRNA degradation. Catalyzes the phosphorolysis of single-stranded polyribonucleotides processively in the 3'- to 5'-direction. The chain is Polyribonucleotide nucleotidyltransferase from Leptospira borgpetersenii serovar Hardjo-bovis (strain L550).